We begin with the raw amino-acid sequence, 429 residues long: O-methyltransferase phnC (429 aa).

Aspartate 285 contacts S-adenosyl-L-methionine.

This sequence belongs to the class I-like SAM-binding methyltransferase superfamily. Cation-independent O-methyltransferase family. COMT subfamily.

It catalyses the reaction (2'R)-atrovenetin + S-adenosyl-L-methionine = deoxyherqueinone + S-adenosyl-L-homocysteine + H(+). It functions in the pathway secondary metabolite biosynthesis. Functionally, O-methyltransferase; part of the gene cluster that mediates the biosynthesis of phenalenones such as herqueinone, compounds that have been reported to treat tumors, bacterial infections and/or mycoses, and rheumatic diseases. The non-reducing polyketide synthase phnA synthesizes the heptaketide backbone and cyclizes it into the angular, hemiketal-containing naphtho-gamma-pyrone prephenalenone. The product template (PT) domain of phnA catalyzes only the C4-C9 aldol condensation, which is unprecedented among known PT domains. The transformation of prephenalenone to phenalenones requires an FAD-dependent monooxygenase phnB, which catalyzes the C2 aromatic hydroxylation of prephenalenone and ring opening of the gamma-pyrone ring simultaneously. Subsequent intramolecular deprotonation of C3 phenolic oxygen accelerates phenalenone ring closure to yield the tricyclic phenalenone core with a C2 hydroxylation. The prenyltransferase phnF further catalyzes reverse C-prenylation of phenalenone by direct electrophilic substitution at C6, or possibly via first a forward O-prenylation of a neighboring phenol in phenalenone, followed by a Claisen rearrangement. The hydroalkoxylation enzyme phnH catalyzes the 5-exo-trig cyclization via acid catalysis after the spontaneous deprotonation of 7-OH, which leads to the formation of the dihydrobenzofuran atrovenetin. Atrovenetin is further converted to deoxyherqueinone by the O-methyltransferase phnC which can methylate C2-OH to stabilize the northern portion of the phenalenone core. Finally, the oxidoreductase phnG converts deoxyherqueinone to herqueinone via C6 hydroxylation. This is O-methyltransferase phnC from Penicillium herquei.